The following is a 478-amino-acid chain: Ankyrin repeat and BTB/POZ domain-containing protein 1 (478 aa).

ANK repeat units follow at residues 1 to 31 and 35 to 64; these read MDTSDLFASCRKGDVGRVRYLLEQRDVEVNV and WDSTPLYYACLCGHEELVRYLLANGARCEA. BTB domains follow at residues 115 to 182 and 272 to 346; these read SDVV…DIGV and PDIC…ELPP. Positions 451-477 form a coiled coil; the sequence is VQTYSAIEEAQQRLRALEDLLVSIGLD.

It localises to the cytoplasm. Functionally, may act as a mediator of the PTEN growth-suppressive signaling pathway. May play a role in developmental processes. This is Ankyrin repeat and BTB/POZ domain-containing protein 1 from Mus musculus (Mouse).